Reading from the N-terminus, the 113-residue chain is MNTVRVTFLLVFVLAVSLGQADKDENRMEMQEKTEQGKSYLDFAENLLLQKLEELEAKLLEEDSEESRNSRQKRCIGEGVPCDENDPRCCSGLICLKPTLHGIWYKSYYCYKK.

The first 21 residues, 1–21, serve as a signal peptide directing secretion; it reads MNTVRVTFLLVFVLAVSLGQA. Residues 22 to 74 constitute a propeptide that is removed on maturation; sequence DKDENRMEMQEKTEQGKSYLDFAENLLLQKLEELEAKLLEEDSEESRNSRQKR. A disordered region spans residues 61–83; sequence EEDSEESRNSRQKRCIGEGVPCD. 3 disulfides stabilise this stretch: cysteine 75/cysteine 90, cysteine 82/cysteine 95, and cysteine 89/cysteine 110.

The protein belongs to the neurotoxin 14 (magi-1) family. 01 (HNTX-16) subfamily. Expressed by the venom gland.

It localises to the secreted. Probable ion channel inhibitor. This Cyriopagopus hainanus (Chinese bird spider) protein is U11-theraphotoxin-Hhn1g.